Consider the following 410-residue polypeptide: LL-diaminopimelate aminotransferase (410 aa).

Residues Tyr15 and Gly42 each coordinate substrate. Pyridoxal 5'-phosphate contacts are provided by residues Tyr72, 108–109 (AK), Tyr132, Asn187, Tyr218, and 246–248 (SFS). Substrate contacts are provided by Lys109, Tyr132, and Asn187. Lys249 bears the N6-(pyridoxal phosphate)lysine mark. Residues Arg257 and Asn292 each contribute to the pyridoxal 5'-phosphate site. Positions 292 and 388 each coordinate substrate.

This sequence belongs to the class-I pyridoxal-phosphate-dependent aminotransferase family. LL-diaminopimelate aminotransferase subfamily. As to quaternary structure, homodimer. Pyridoxal 5'-phosphate serves as cofactor.

It catalyses the reaction (2S,6S)-2,6-diaminopimelate + 2-oxoglutarate = (S)-2,3,4,5-tetrahydrodipicolinate + L-glutamate + H2O + H(+). It participates in amino-acid biosynthesis; L-lysine biosynthesis via DAP pathway; LL-2,6-diaminopimelate from (S)-tetrahydrodipicolinate (aminotransferase route): step 1/1. Involved in the synthesis of meso-diaminopimelate (m-DAP or DL-DAP), required for both lysine and peptidoglycan biosynthesis. Catalyzes the direct conversion of tetrahydrodipicolinate to LL-diaminopimelate. Is also able to catalyze the reverse reaction in vitro, i.e. the transamination of LL-diaminopimelate with 2-oxoglutarate to produce 2-oxo-6-aminopimelate (in equilibrium with tetrahydrodipicolinate) and glutamate. Has maximal aminotransferase activity using 2-oxoglutarate as an amino group acceptor, and cannot use oxaloacetate instead of 2-oxoglutarate, although 2-oxoadipate can substitute with 21% relative activity. Cannot use m-DAP, lysine or ornithine as the amino-group donor, when using 2-oxoglutarate as the amino-group acceptor. The sequence is that of LL-diaminopimelate aminotransferase from Methanothermobacter thermautotrophicus (strain ATCC 29096 / DSM 1053 / JCM 10044 / NBRC 100330 / Delta H) (Methanobacterium thermoautotrophicum).